The sequence spans 128 residues: Phosphoribosyl-AMP cyclohydrolase (128 aa).

Asp79 provides a ligand contact to Mg(2+). Cys80 provides a ligand contact to Zn(2+). Residues Asp81 and Asp83 each contribute to the Mg(2+) site. Residues Cys97 and Cys104 each contribute to the Zn(2+) site.

It belongs to the PRA-CH family. In terms of assembly, homodimer. Mg(2+) serves as cofactor. Zn(2+) is required as a cofactor.

It is found in the cytoplasm. The catalysed reaction is 1-(5-phospho-beta-D-ribosyl)-5'-AMP + H2O = 1-(5-phospho-beta-D-ribosyl)-5-[(5-phospho-beta-D-ribosylamino)methylideneamino]imidazole-4-carboxamide. It functions in the pathway amino-acid biosynthesis; L-histidine biosynthesis; L-histidine from 5-phospho-alpha-D-ribose 1-diphosphate: step 3/9. In terms of biological role, catalyzes the hydrolysis of the adenine ring of phosphoribosyl-AMP. The protein is Phosphoribosyl-AMP cyclohydrolase of Saccharophagus degradans (strain 2-40 / ATCC 43961 / DSM 17024).